A 503-amino-acid chain; its full sequence is UDP-N-acetylglucosamine--peptide N-acetylglucosaminyltransferase GtfA subunit (503 aa).

The interval 1 to 78 (MTIYNINLGI…FTDIKIAPTS (78 aa)) is N-terminus R-fold-1. Position 16–19 (16–19 (GVEY)) interacts with UDP. The extended beta-sheet domain stretch occupies residues 79 to 195 (VTVDDVLAYF…VYHFKDKIFY (117 aa)). Residues 196–306 (GKQAFVRAFM…QPKIVTIPVG (111 aa)) are C-terminus R-fold-1. His-242 contributes to the N-acetyl-D-glucosamine binding site. The tract at residues 307–503 (SIDSLTDSSQ…KKTVEEVLHD (197 aa)) is R-fold-2. Arg-328 contacts UDP. Residue Glu-332 coordinates N-acetyl-D-glucosamine. UDP is bound by residues Lys-333, Gly-358, and 384–385 (HA). An N-acetyl-D-glucosamine-binding site is contributed by 404 to 407 (EGFG). UDP is bound at residue 408–412 (LTLME).

This sequence belongs to the glycosyltransferase group 1 family. Glycosyltransferase 4 subfamily. As to quaternary structure, monomer. Interacts with stabilizing protein GtfB, probably as a heterotetramer with 2 subunits each of GtfA and GtfB, part of the accessory SecA2/SecY2 protein translocation apparatus.

The protein resides in the cytoplasm. Its subcellular location is the cell membrane. It catalyses the reaction L-seryl-[protein] + UDP-N-acetyl-alpha-D-glucosamine = 3-O-[N-acetyl-alpha-D-glucosaminyl]-L-seryl-[protein] + UDP + H(+). It participates in protein modification; protein glycosylation. In terms of biological role, required for the polymorphic O-glycosylation of serine-rich repeat protein PsrP. Catalyzes the first step in glycosylation by transferring N-acetylglucosamine from UDP-GlcNAc to serine residues in PsrP. Part of the accessory SecA2/SecY2 system specifically required to export serine-rich repeat cell wall proteins encoded upstream in the same operon. The GtfA-GtfB complex adds GlcNAc from UDP-GlcNAc to PsrP (experimentally characterized with truncated PsrP-SSR1 constructs); this subunit alone has weak N-acetylglucosaminyl transferase activity that is 10-fold stimulated by GtfB. The complex requires at least a 25 residue-long peptide for activity; the in vitro assay has only been seen to glycosylate Ser residues. The alpha linkage was shown in L.reuteri. In Streptococcus pneumoniae serotype 4 (strain ATCC BAA-334 / TIGR4), this protein is UDP-N-acetylglucosamine--peptide N-acetylglucosaminyltransferase GtfA subunit.